A 1222-amino-acid polypeptide reads, in one-letter code: BOS complex subunit NOMO3 (1222 aa).

The N-terminal stretch at 1 to 31 (MLVGQGAGPLGPAVVTAAVVLLLSGVGPAHG) is a signal peptide. Residues 32–1155 (SEDIVVGCGG…NPTRKLPEQD (1124 aa)) lie on the Extracellular side of the membrane. N-linked (GlcNAc...) asparagine glycans are attached at residues Asn50, Asn218, and Asn618. A helical transmembrane segment spans residues 1156-1176 (IAQGSYIALPLTLLVLLAGYN). Residues 1177-1222 (HDKLIPLLLQLTSRLQGVGALGQAASDNSGPEDAKRQAKKQKTRRT) are Cytoplasmic-facing. Positions 1198 to 1222 (GQAASDNSGPEDAKRQAKKQKTRRT) are disordered. The segment covering 1213–1222 (QAKKQKTRRT) has biased composition (basic residues).

Component of the back of Sec61 (BOS) complex, composed of NCLN/Nicalin, NOMO (NOMO1, NOMO2 or NOMO3) and TMEM147. The BOS complex is part of the multi-pass translocon (MPT) complex, composed of three subcomplexes, the GEL complex (composed of RAB5IF/OPTI and TMCO1), the BOS complex (composed of NCLN/Nicalin, NOMO and TMEM147) and the PAT complex (composed of WDR83OS/Asterix and CCDC47). The MPT complex associates with the SEC61 complex. Due to the strong similarity between NOMO1, NOMO2 and NOMO3, similar interaction pattern probably occur for the three gene copies.

It localises to the endoplasmic reticulum membrane. Functionally, component of the multi-pass translocon (MPT) complex that mediates insertion of multi-pass membrane proteins into the lipid bilayer of membranes. The MPT complex takes over after the SEC61 complex: following membrane insertion of the first few transmembrane segments of proteins by the SEC61 complex, the MPT complex occludes the lateral gate of the SEC61 complex to promote insertion of subsequent transmembrane regions. The sequence is that of BOS complex subunit NOMO3 (NOMO3) from Homo sapiens (Human).